The sequence spans 288 residues: Syntaxin-1A (288 aa).

Residues 1 to 13 (MKDRTQELRTAKD) are compositionally biased toward basic and acidic residues. Residues 1–20 (MKDRTQELRTAKDSDDDDDV) form a disordered region. Topologically, residues 1-265 (MKDRTQELRT…KYQSKARRKK (265 aa)) are cytoplasmic. A phosphoserine mark is found at Ser-14, Ser-64, and Ser-95. Positions 68-109 (DEKTKEELEELMSDIKKTANKVRSKLKSIEQSIEQEEGLNRS) form a coiled coil. Residue Ser-188 is modified to Phosphoserine; by DAPK1. Residues 192 to 254 (LSEIETRHSE…ERAVSDTKKA (63 aa)) form the t-SNARE coiled-coil homology domain. Glycyl lysine isopeptide (Lys-Gly) (interchain with G-Cter in SUMO) cross-links involve residues Lys-252, Lys-253, and Lys-256. A helical; Anchor for type IV membrane protein membrane pass occupies residues 266–288 (IMIVICCVVLGIVIASTFGGIFG).

This sequence belongs to the syntaxin family. Part of the SNARE core complex containing SNAP25, VAMP2 and STX1A; this complex constitutes the basic catalytic machinery of the complex neurotransmitter release apparatus. The SNARE complex interacts with CPLX1. Interacts with STXBP1. The interaction with STXBP1 promotes assembly of the SNARE complex. Interacts (via C-terminus) with KCNB1 (via C-terminus); the interaction increases in a calcium-dependent manner and induces a pore-independent enhancement of exocytosis in neuroendocrine cells, chromaffin cells, pancreatic beta cells and from the soma of dorsal root ganglia (DRG) neurons. Interacts with SYTL4. Interacts with STXBP6. Interacts with PLCL1 (via C2 domain). Interacts with OTOF. Interacts with LGI3. Interacts (via the H3 domain) with SLC6A4 (via the N-terminus); this interaction regulates SLC4A6 channel conductance in thalamocortical neurons. Interacts with SYT6 and SYT8; the interaction is Ca(2+)-dependent. Interacts with VAMP8. Interacts with SNAP23. Interacts with VAPA and SYBU. Interacts with PRRT2. Interacts with SEPT8. Interacts with STXBP5L. Interacts with synaptotagmin-1/SYT1. Interacts with SEPTIN5; in the cerebellar cortex. Interacts with SEPTIN4; in the striatum. In terms of processing, phosphorylated by CK2. Phosphorylation at Ser-188 by DAPK1 significantly decreases its interaction with STXBP1. Sumoylated, sumoylation is required for regulation of synaptic vesicle endocytosis. Post-translationally, (Microbial infection) Targeted and hydrolyzed by C.botulinum neurotoxin type C (BoNT/C) which inhibits neurotransmitter release. Probably hydrolyzes the 253-Lys-|-Ala-254 bond.

The protein localises to the cytoplasmic vesicle. It localises to the secretory vesicle. It is found in the synaptic vesicle membrane. Its subcellular location is the synapse. The protein resides in the synaptosome. The protein localises to the cell membrane. In terms of biological role, plays an essential role in hormone and neurotransmitter calcium-dependent exocytosis and endocytosis. Part of the SNARE (Soluble NSF Attachment Receptor) complex composed of SNAP25, STX1A and VAMP2 which mediates the fusion of synaptic vesicles with the presynaptic plasma membrane. STX1A and SNAP25 are localized on the plasma membrane while VAMP2 resides in synaptic vesicles. The pairing of the three SNAREs from the N-terminal SNARE motifs to the C-terminal anchors leads to the formation of the SNARE complex, which brings membranes into close proximity and results in final fusion. Participates in the calcium-dependent regulation of acrosomal exocytosis in sperm. Also plays an important role in the exocytosis of hormones such as insulin or glucagon-like peptide 1 (GLP-1). The protein is Syntaxin-1A (STX1A) of Bos taurus (Bovine).